The chain runs to 285 residues: uncharacterized protein (285 aa).

Residues Met1–Asp25 are disordered. Ile45–Val69 is a binding site for NADP(+). A substrate-binding site is contributed by Ser177. Residue Tyr190 is the Proton acceptor of the active site.

It belongs to the short-chain dehydrogenases/reductases (SDR) family.

This is an uncharacterized protein from Bacillus subtilis (strain 168).